A 169-amino-acid polypeptide reads, in one-letter code: Nucleoside diphosphate kinase 3-A (169 aa).

6 residues coordinate ADP: K29, R105, T111, R122, V129, and N132. Catalysis depends on H135, which acts as the Pros-phosphohistidine intermediate.

Belongs to the NDK family. As to quaternary structure, homohexamer. Requires Mg(2+) as cofactor.

It localises to the mitochondrion outer membrane. The protein resides in the cytoplasm. It is found in the cytoskeleton. The protein localises to the cilium basal body. The catalysed reaction is a 2'-deoxyribonucleoside 5'-diphosphate + ATP = a 2'-deoxyribonucleoside 5'-triphosphate + ADP. It catalyses the reaction a ribonucleoside 5'-diphosphate + ATP = a ribonucleoside 5'-triphosphate + ADP. Catalyzes the phosphorylation of ribonucleosides and deoxyribonucleoside diphosphates, other than ATP, into the corresponding triphosphates with ATP as the major phosphate donor. The ATP gamma phosphate is transferred to the nucleoside diphosphate beta phosphate via a ping-pong mechanism, using a phosphorylated active-site intermediate. Through the catalyzed exchange of gamma-phosphate between di- and triphosphonucleosides participates in regulation of intracellular nucleotide homeostasis. Required for ciliary function during renal development. Its function is as follows. Independently of its kinase activity, facilitates mitochondrial tethering prior to membrane fusion through its direct membrane-binding and hexamerization. Implicated in repair of both single- and double-stranded breaks in DNA, independently of its kinase activity. The protein is Nucleoside diphosphate kinase 3-A of Xenopus laevis (African clawed frog).